A 222-amino-acid polypeptide reads, in one-letter code: Peptide methionine sulfoxide reductase MsrA (222 aa).

Cys-54 is an active-site residue.

Belongs to the MsrA Met sulfoxide reductase family.

It catalyses the reaction L-methionyl-[protein] + [thioredoxin]-disulfide + H2O = L-methionyl-(S)-S-oxide-[protein] + [thioredoxin]-dithiol. It carries out the reaction [thioredoxin]-disulfide + L-methionine + H2O = L-methionine (S)-S-oxide + [thioredoxin]-dithiol. Functionally, has an important function as a repair enzyme for proteins that have been inactivated by oxidation. Catalyzes the reversible oxidation-reduction of methionine sulfoxide in proteins to methionine. The chain is Peptide methionine sulfoxide reductase MsrA from Methylococcus capsulatus (strain ATCC 33009 / NCIMB 11132 / Bath).